Here is a 409-residue protein sequence, read N- to C-terminus: Multidrug resistance protein MdtG (409 aa).

10 helical membrane-spanning segments follow: residues 16–36 (LIVA…VMPF), 58–78 (IVFS…GGLA), 92–112 (LGMG…QFLI), 115–135 (ALLG…ATQV), 146–166 (TLST…GLLA), 173–193 (PVFF…LFCI), 224–244 (LFVT…ILTL), 256–276 (VAFI…LLSA), 291–311 (ILIT…YVQT), and 379–399 (AVFL…WNSL).

It belongs to the major facilitator superfamily. DHA1 family. MdtG (TC 2.A.1.2.20) subfamily.

The protein localises to the cell inner membrane. Functionally, confers resistance to fosfomycin and deoxycholate. This Escherichia coli O9:H4 (strain HS) protein is Multidrug resistance protein MdtG.